The sequence spans 187 residues: Ribosome-recycling factor (187 aa).

The protein belongs to the RRF family.

It localises to the cytoplasm. In terms of biological role, responsible for the release of ribosomes from messenger RNA at the termination of protein biosynthesis. May increase the efficiency of translation by recycling ribosomes from one round of translation to another. This chain is Ribosome-recycling factor, found in Nitrobacter winogradskyi (strain ATCC 25391 / DSM 10237 / CIP 104748 / NCIMB 11846 / Nb-255).